Here is a 357-residue protein sequence, read N- to C-terminus: MSAFEKPQIISHIQKSLSYTVFDCKWMPCSAKFVTMGNFARGTGVIQLYEIQQGDLKLLREIEKAKPIKCGTFGATSLQQRYLATGDFAGNLHIWNLEAPEVPVYSVKGHKEIINTIDGVGGLGIGEGAPEIVTGSRDGTVKVWDPRQKDDPVANMEPVQGENKRDCWTVAFGNAYNQEERVVCAGYDNGDIKLFDLRNMSLRWETNIKNGVCSLEFDRKDISMNKLVATSLEGKFHVFDMRTQHPTKGFASVSEKAHKSTVWQVRHLPQNREVFLTAGGAGSLHLWKYEYPIQRSKKDSEGVEMGVAGSVSLLQNVTLSTQPVSSLDWSPDKRGLCICSSFDQMVRVLIVTKLHKI.

WD repeat units follow at residues 63 to 105, 115 to 154, 162 to 205, 207 to 249, 257 to 297, and 319 to 357; these read EKAK…VPVY, NTID…DPVA, ENKR…LRWE, NIKN…PTKG, AHKS…QRSK, and LSTQ…LHKI.

As to quaternary structure, component of the PAQosome complex which is responsible for the biogenesis of several protein complexes and which consists of R2TP complex members RUVBL1, RUVBL2, RPAP3 and PIH1D1, URI complex members PFDN2, PFDN6, PDRG1, UXT and URI1 as well as ASDURF, POLR2E and DNAAF10/WDR92. Interacts with PIH1D1; the interaction associates DNAAF10 with the R2TP complex. Interacts with several dynein axonemal assembly factors.

The protein resides in the dynein axonemal particle. In terms of biological role, key assembly factor specifically required for the stability of axonemal dynein heavy chains in cytoplasm. In Bos taurus (Bovine), this protein is Dynein axonemal assembly factor 10 (DNAAF10).